We begin with the raw amino-acid sequence, 574 residues long: MELPILKANAITTILAAVTFCFASSQNITEEFYQSTCSAVSKGYLSALRTGWYTSVITIELSNIKENKCNGTDAKVKLINQELDKYKNAVTELQLLMQSTTAANNRARRELPRFMNYTLNNTKKTNVTLSKKRKRRFLGFLLGVGSAIASGIAVSKVLHLEGEVNKIKSALLSTNKAVVSLSNGVSVLTSKVLDLKNYIDKQLLPIVNKQSCRISNIETVIEFQQKNNRLLEITREFSVNAGVTTPVSTYMLTNSELLSLINDMPITNDQKKLMSNNVQIVRQQSYSIMSIIKEEVLAYVVQLPLYGVIDTPCWKLHTSPLCTTNTKEGSNICLTRTDRGWYCDNAGSVSFFPQAETCKVQSNRVFCDTMNSLTLPSEVNLCNVDIFNPKYDCKIMTSKTDVSSSVITSLGAIVSCYGKTKCTASNKNRGIIKTFSNGCDYVSNKGVDTVSVGNTLYYVNKQEGKSLYVKGEPIINFYDPLVFPSDEFDASISQVNEKINQSLAFIRKSDELLHHVNAGKSTTNIMITTIIIVIIVILLSLIAVGLLLYCKARSTPVTLSKDQLSGINNIAFSN.

The signal sequence occupies residues 1–25 (MELPILKANAITTILAAVTFCFASS). At 26–524 (QNITEEFYQS…HVNAGKSTTN (499 aa)) the chain is on the extracellular side. N27 and N70 each carry an N-linked (GlcNAc...) asparagine; by host glycan. Cystine bridges form between C37–C439, C69–C212, C313–C343, C322–C333, C358–C367, C382–C393, and C416–C422. Residues 76–96 (VKLINQELDKYKNAVTELQLL) are a coiled coil. Residues N116, N120, and N126 are each glycosylated (N-linked (GlcNAc...) asparagine; by host). A fusion peptide region spans residues 137–157 (FLGFLLGVGSAIASGIAVSKV). The stretch at 158–209 (LHLEGEVNKIKSALLSTNKAVVSLSNGVSVLTSKVLDLKNYIDKQLLPIVNK) forms a coiled coil. Residues 481–516 (LVFPSDEFDASISQVNEKINQSLAFIRKSDELLHHV) adopt a coiled-coil conformation. N500 carries N-linked (GlcNAc...) asparagine; by host glycosylation. The chain crosses the membrane as a helical span at residues 525–550 (IMITTIIIVIIVILLSLIAVGLLLYC). C550 carries the S-palmitoyl cysteine; by host lipid modification. The Cytoplasmic segment spans residues 551–574 (KARSTPVTLSKDQLSGINNIAFSN).

It belongs to the paramyxoviruses fusion glycoprotein family. In terms of assembly, homotrimer. Heterodimer with fusion protein F2; disulfide-linked. Interacts with host NCL; this interaction plays a role in viral entry into the host cell. As a heterodimer with F2, interacts with host heparan sulfate. As a heterodimer with F2, interacts with host IGF1R; this interaction activates PRKCZ/PKCzeta that recruits NCL/nucleolin from the host nucleus to the plasma membrane. Part of a complex composed of F1, F2 and G glycoproteins. As a heterodimer with F2, interacts with host RHOA; this interaction facilitates virus-induced syncytium formation. As to quaternary structure, homotrimer. Heterodimer with fusion protein F1; disulfide-linked. As a heterodimer with F1, interacts with host heparan sulfate. As a heterodimer with F1, interacts with host IGF1R; this interaction activates PRKCZ/PKCzeta that recruits NCL/nucleolin from the host nucleus to the plasma membrane. Part of a complex composed of F1, F2 and G glycoproteins. As a heterodimer with F1, interacts with host RHOA; this interaction facilitates virus-induced syncytium formation. Post-translationally, the F glycoprotein is synthesized as a F0 inactive precursor that is heavily N-glycosylated and processed at two sites by a host furin-like protease probably in the Golgi. The cleavage site between p27 and F1 may occur after endocytosis to yield the mature F1 and F2 proteins. Both cleavages are required for membrane fusion and p27 is released from the processed protein.

Its subcellular location is the host Golgi apparatus membrane. The protein localises to the virion membrane. It is found in the host cell membrane. Functionally, inactive precursor that is cleaved at two sites by a furin-like protease to give rise to the mature F1 and F2 fusion glycoproteins. Its function is as follows. Class I viral fusion protein. Under the current model, the protein has at least 3 conformational states: pre-fusion native state, pre-hairpin intermediate state, and post-fusion hairpin state. During viral and plasma cell membrane fusion, the coiled coil regions assume a trimer-of-hairpins structure, positioning the fusion peptide in close proximity to the C-terminal region of the ectodomain. The formation of this structure appears to drive apposition and subsequent fusion of viral and cellular membranes leading to delivery of the nucleocapsid into the cytoplasm. This fusion is pH independent and occurs at the plasma or endosomal membrane. The trimer of F1-F2 (F protein) also facilitates the attachment to host cell by binding to host heparan sulfate. F protein is involved in the entry into the host cell through the interaction with host IGF1R. This interaction activates PRKCZ/PKCzeta that recruits host NCL/nucleolin to the apical cell surface where it can bind fusion glycoprotein F1. Later in infection, F protein expressed at the plasma membrane of infected cells can mediate fusion with adjacent cells to form syncytia, a cytopathic effect that could lead to tissue necrosis. F protein may trigger p53-dependent apoptosis. In terms of biological role, major determinant of the species specificity of RSV infection. The trimer of F1-F2 (F protein) also facilitates the attachment to host cell by binding to host heparan sulfate. F protein is involved in the entry into the host cell through the interaction with host IGF1R. This interaction activates PRKCZ/PKCzeta that recruits host NCL/nucleolin to the apical cell surface where it can bind fusion glycoprotein F1. Later in infection, F protein expressed at the plasma membrane of infected cells can mediate fusion with adjacent cells to form syncytia, a cytopathic effect that could lead to tissue necrosis. F protein seems to trigger p53-dependent apoptosis. The polypeptide is Fusion glycoprotein F0 (F) (Homo sapiens (Human)).